Here is a 377-residue protein sequence, read N- to C-terminus: Glutamate 5-kinase (377 aa).

K20 contributes to the ATP binding site. Substrate is bound by residues S60, D147, and N159. Residue 179-180 participates in ATP binding; it reads SD. One can recognise a PUA domain in the interval 281–355; sequence HGQLHLDAGA…GQSTSDLPEF (75 aa).

The protein belongs to the glutamate 5-kinase family.

The protein resides in the cytoplasm. The enzyme catalyses L-glutamate + ATP = L-glutamyl 5-phosphate + ADP. It functions in the pathway amino-acid biosynthesis; L-proline biosynthesis; L-glutamate 5-semialdehyde from L-glutamate: step 1/2. In terms of biological role, catalyzes the transfer of a phosphate group to glutamate to form L-glutamate 5-phosphate. In Corynebacterium jeikeium (strain K411), this protein is Glutamate 5-kinase.